The sequence spans 284 residues: Small ribosomal subunit protein uS5 (284 aa).

Basic and acidic residues predominate over residues 1 to 10 (MMADEKKTPE). A disordered region spans residues 1-105 (MMADEKKTPE…DNRRGGRREE (105 aa)). Over residues 14 to 23 (ETATPAVAVE) the composition is skewed to low complexity. Residues 24–43 (DALKAEPTETLEAQKAKAEA) show a composition bias toward basic and acidic residues. The span at 44-67 (ETPAVAETPSEAAANQSAAQGAEG) shows a compositional bias: low complexity. Over residues 68-105 (QPRERGGHDRGGRGGRGGNDRGRGRGGRDNRRGGRREE) the composition is skewed to basic and acidic residues. An S5 DRBM domain is found at 110–173 (IIEKLVHINR…AAARKKMIRV (64 aa)). The tract at residues 246 to 284 (DQTSPKSVAQRRGKKVADLLGRGGASEAEAEADAAAIAE) is disordered.

It belongs to the universal ribosomal protein uS5 family. In terms of assembly, part of the 30S ribosomal subunit. Contacts proteins S4 and S8.

Its function is as follows. With S4 and S12 plays an important role in translational accuracy. Located at the back of the 30S subunit body where it stabilizes the conformation of the head with respect to the body. The chain is Small ribosomal subunit protein uS5 from Erythrobacter litoralis (strain HTCC2594).